The chain runs to 139 residues: Deoxyuridine 5'-triphosphate nucleotidohydrolase (139 aa).

Substrate-binding positions include 58 to 60, N71, 75 to 77, and M85; these read RSG and LID.

This sequence belongs to the dUTPase family. Requires Mg(2+) as cofactor.

It carries out the reaction dUTP + H2O = dUMP + diphosphate + H(+). Its pathway is pyrimidine metabolism; dUMP biosynthesis; dUMP from dCTP (dUTP route): step 2/2. Its function is as follows. This enzyme is involved in nucleotide metabolism: it produces dUMP, the immediate precursor of thymidine nucleotides and it decreases the intracellular concentration of dUTP so that uracil cannot be incorporated into DNA. This Gamma-proteobacterium EBAC31A08 protein is Deoxyuridine 5'-triphosphate nucleotidohydrolase.